A 351-amino-acid chain; its full sequence is Signal recognition particle receptor FtsY (351 aa).

Residues 152–159 (GVNGSGKT), 235–239 (DTAGR), and 299–302 (TKMD) contribute to the GTP site.

Belongs to the GTP-binding SRP family. FtsY subfamily. In terms of assembly, part of the signal recognition particle protein translocation system, which is composed of SRP and FtsY.

Its subcellular location is the cell membrane. The protein localises to the cytoplasm. It carries out the reaction GTP + H2O = GDP + phosphate + H(+). Its function is as follows. Involved in targeting and insertion of nascent membrane proteins into the cytoplasmic membrane. Acts as a receptor for the complex formed by the signal recognition particle (SRP) and the ribosome-nascent chain (RNC). The sequence is that of Signal recognition particle receptor FtsY from Metamycoplasma hominis (strain ATCC 23114 / DSM 25592 / NBRC 14850 / NCTC 10111 / PG21) (Mycoplasma hominis).